A 336-amino-acid polypeptide reads, in one-letter code: MHAIQFVEKGRAVLAELPVADLPPGHALVRVKASGLCHTDIDVLHARYGDGAFPVIPGHEYAGEVAAVASDVTVFKAGDRVVVDPNLPCGTCASCRKGLTNLCSTLKAYGVSHNGGFAEFSVVRADHLHGIGSMPYHVAALAEPLACVVNGMQSAGIGESGVVPENALVFGAGPIGLLLALSLKSRGIATVTMADINESRLAFAQDLGLQTAVSGSEALSRQRKEFDFVADATGIAPVAEAMIPLVADGGTALFFGVCAPDARISVAPFEIFRRQLKLVGSHSLNRNIPQALAILETDGEVMARLVSHRLPLSEMLPFFTKKPSDPATMKVQFAAE.

The Zn(2+) site is built by C37, H59, E60, C89, C92, C95, and C103.

Belongs to the zinc-containing alcohol dehydrogenase family. Requires Zn(2+) as cofactor.

It catalyses the reaction D-altritol + NAD(+) = keto-D-tagatose + NADH + H(+). It participates in carbohydrate metabolism. Its function is as follows. Involved in D-altritol catabolism. Catalyzes the oxidation of D-altritol to D-tagatose. This Agrobacterium fabrum (strain C58 / ATCC 33970) (Agrobacterium tumefaciens (strain C58)) protein is D-altritol 5-dehydrogenase.